The following is a 197-amino-acid chain: Putative glutathione-dependent formaldehyde-activating enzyme (197 aa).

In terms of domain architecture, CENP-V/GFA spans 22 to 171 (FPGGKLYCHC…LKSLGLENYD (150 aa)). Residues cysteine 29, cysteine 31, cysteine 50, cysteine 52, cysteine 55, cysteine 97, and cysteine 100 each coordinate Zn(2+).

Belongs to the Gfa family. The cofactor is Zn(2+).

It catalyses the reaction S-(hydroxymethyl)glutathione = glutathione + formaldehyde. It participates in one-carbon metabolism; formaldehyde degradation; formate from formaldehyde (glutathione route): step 1/3. Its function is as follows. Catalyzes the condensation of formaldehyde and glutathione to S-hydroxymethylglutathione. This chain is Putative glutathione-dependent formaldehyde-activating enzyme, found in Emericella nidulans (strain FGSC A4 / ATCC 38163 / CBS 112.46 / NRRL 194 / M139) (Aspergillus nidulans).